A 142-amino-acid polypeptide reads, in one-letter code: Putative pre-16S rRNA nuclease (142 aa).

Belongs to the YqgF nuclease family.

It localises to the cytoplasm. Functionally, could be a nuclease involved in processing of the 5'-end of pre-16S rRNA. This chain is Putative pre-16S rRNA nuclease, found in Staphylococcus aureus (strain JH1).